Here is a 255-residue protein sequence, read N- to C-terminus: Receptor expression-enhancing protein 3 (255 aa).

Helical transmembrane passes span 1–21 (MVSW…YPAY), 35–55 (YVRW…ETVA), and 59–79 (VAWF…LLSP). The interval 158–242 (TIQGDEPVGQ…KGRKEVRYGS (85 aa)) is disordered. Thr201 bears the Phosphothreonine mark. Ser210 carries the post-translational modification Phosphoserine. The segment covering 222–231 (RSQSMKSVKT) has biased composition (polar residues).

Belongs to the DP1 family. Expressed in circumvallate papillae.

The protein localises to the endoplasmic reticulum membrane. Its function is as follows. Microtubule-binding protein required to ensure proper cell division and nuclear envelope reassembly by sequestering the endoplasmic reticulum away from chromosomes during mitosis. Probably acts by clearing the endoplasmic reticulum membrane from metaphase chromosomes. The protein is Receptor expression-enhancing protein 3 (REEP3) of Homo sapiens (Human).